The chain runs to 1843 residues: Nonribosomal peptide synthetase SIDD (1843 aa).

The interval methionine 1–serine 83 is disordered. Residues glutamine 65–glutamine 81 are compositionally biased toward low complexity. The interval threonine 133–cysteine 528 is adenylation 1. The interval lysine 628–glutamate 647 is disordered. Positions glutamate 641–serine 716 constitute a Carrier 1 domain. At serine 677 the chain carries O-(pantetheine 4'-phosphoryl)serine. Residues valine 753–leucine 1175 are condensation 1. Residues serine 1289–aspartate 1365 form the Carrier 2 domain. Serine 1326 carries the O-(pantetheine 4'-phosphoryl)serine modification. Positions phenylalanine 1447–leucine 1734 are condensation 2.

It belongs to the NRP synthetase family. It depends on pantetheine 4'-phosphate as a cofactor.

It functions in the pathway siderophore biosynthesis. Functionally, nonribosomal peptide synthetase; part of the gene cluster that mediates the biosynthesis of at least 11 siderophores, including beauverichelin A, dimerumic acid (DA), Na-dimethyl coprogen (NADC), eleutherazine B, ferricrocin (FC), fusarinine A, fusarinine C (FsC), metachelin A, mevalonolactone, rhodotorulic acid (RA) and tenellin. This cocktail of siderophores for iron metabolism is essential for virulence, and more specifically for the fungal virulence in penetrating through the host cuticle. Siderophore synthesis is also involved in conidial germination under iron-deficient conditions. SIDC catalyzes the assembly of ferricrocin whereas SIDD catalyzes the assembly of fusarinine C. In Beauveria bassiana (strain ARSEF 2860) (White muscardine disease fungus), this protein is Nonribosomal peptide synthetase SIDD.